Reading from the N-terminus, the 411-residue chain is LL-diaminopimelate aminotransferase (411 aa).

Substrate is bound by residues Tyr-15 and Gly-42. Residues Tyr-72, 108–109, Tyr-132, Asn-187, Tyr-218, and 246–248 each bind pyridoxal 5'-phosphate; these read AK and SFS. The substrate site is built by Lys-109, Tyr-132, and Asn-187. Residue Lys-249 is modified to N6-(pyridoxal phosphate)lysine. The pyridoxal 5'-phosphate site is built by Arg-257 and Asn-292. Substrate is bound by residues Asn-292 and Arg-388.

The protein belongs to the class-I pyridoxal-phosphate-dependent aminotransferase family. LL-diaminopimelate aminotransferase subfamily. In terms of assembly, homodimer. It depends on pyridoxal 5'-phosphate as a cofactor.

It carries out the reaction (2S,6S)-2,6-diaminopimelate + 2-oxoglutarate = (S)-2,3,4,5-tetrahydrodipicolinate + L-glutamate + H2O + H(+). It participates in amino-acid biosynthesis; L-lysine biosynthesis via DAP pathway; LL-2,6-diaminopimelate from (S)-tetrahydrodipicolinate (aminotransferase route): step 1/1. Involved in the synthesis of meso-diaminopimelate (m-DAP or DL-DAP), required for both lysine and peptidoglycan biosynthesis. Catalyzes the direct conversion of tetrahydrodipicolinate to LL-diaminopimelate. The chain is LL-diaminopimelate aminotransferase from Rippkaea orientalis (strain PCC 8801 / RF-1) (Cyanothece sp. (strain PCC 8801)).